Consider the following 156-residue polypeptide: Small ribosomal subunit protein uS7 (156 aa).

Belongs to the universal ribosomal protein uS7 family. Part of the 30S ribosomal subunit. Contacts proteins S9 and S11.

Its function is as follows. One of the primary rRNA binding proteins, it binds directly to 16S rRNA where it nucleates assembly of the head domain of the 30S subunit. Is located at the subunit interface close to the decoding center, probably blocks exit of the E-site tRNA. The sequence is that of Small ribosomal subunit protein uS7 from Paracoccus denitrificans (strain Pd 1222).